Consider the following 268-residue polypeptide: Testis-specific serine/threonine-protein kinase 3 (268 aa).

A Protein kinase domain is found at 10-265 (YQLGKTIGEG…IEEVSWHPWL (256 aa)). ATP contacts are provided by residues 16–24 (IGEGTYSKV) and K39. D134 (proton acceptor) is an active-site residue. S166 bears the Phosphoserine mark. T168 is modified (phosphothreonine).

The protein belongs to the protein kinase superfamily. CAMK Ser/Thr protein kinase family. It depends on Mg(2+) as a cofactor. Requires Mn(2+) as cofactor. Autophosphorylated at Ser-166. Phosphorylation at Thr-168 by PDPK1 activates the serine/threonine protein kinase activity.

The protein resides in the cell projection. The protein localises to the cilium. It is found in the flagellum. It catalyses the reaction L-seryl-[protein] + ATP = O-phospho-L-seryl-[protein] + ADP + H(+). The catalysed reaction is L-threonyl-[protein] + ATP = O-phospho-L-threonyl-[protein] + ADP + H(+). Activated by phosphorylation on Thr-168 by PDPK1. Serine/threonine protein kinase required for spermatid development and male fertility. This Homo sapiens (Human) protein is Testis-specific serine/threonine-protein kinase 3.